The following is a 377-amino-acid chain: Ribosomal RNA large subunit methyltransferase G (377 aa).

Belongs to the methyltransferase superfamily. RlmG family.

Its subcellular location is the cytoplasm. It carries out the reaction guanosine(1835) in 23S rRNA + S-adenosyl-L-methionine = N(2)-methylguanosine(1835) in 23S rRNA + S-adenosyl-L-homocysteine + H(+). Functionally, specifically methylates the guanine in position 1835 (m2G1835) of 23S rRNA. The sequence is that of Ribosomal RNA large subunit methyltransferase G from Aeromonas salmonicida (strain A449).